A 318-amino-acid chain; its full sequence is NADH-ubiquinone oxidoreductase chain 1 (318 aa).

Transmembrane regions (helical) follow at residues 2 to 22, 69 to 89, 102 to 122, 146 to 166, 171 to 191, 231 to 251, 253 to 273, and 294 to 314; these read FMIN…FLTL, FMFT…WVPL, MLFI…SGWA, LAII…STLT, HLWL…STLA, IIMM…NPLL, EAHT…FLWV, and LPLT…LACI.

This sequence belongs to the complex I subunit 1 family. Core subunit of respiratory chain NADH dehydrogenase (Complex I) which is composed of 45 different subunits.

It localises to the mitochondrion inner membrane. It carries out the reaction a ubiquinone + NADH + 5 H(+)(in) = a ubiquinol + NAD(+) + 4 H(+)(out). In terms of biological role, core subunit of the mitochondrial membrane respiratory chain NADH dehydrogenase (Complex I) which catalyzes electron transfer from NADH through the respiratory chain, using ubiquinone as an electron acceptor. Essential for the catalytic activity and assembly of complex I. The polypeptide is NADH-ubiquinone oxidoreductase chain 1 (MT-ND1) (Dugong dugon (Dugong)).